Here is a 601-residue protein sequence, read N- to C-terminus: Elongation factor 4 (601 aa).

In terms of domain architecture, tr-type G spans 7–189 (DNIRNFSIVA…AIVKRLPAPK (183 aa)). GTP contacts are provided by residues 19 to 24 (DHGKST) and 136 to 139 (NKVD).

The protein belongs to the TRAFAC class translation factor GTPase superfamily. Classic translation factor GTPase family. LepA subfamily.

The protein localises to the cell inner membrane. The enzyme catalyses GTP + H2O = GDP + phosphate + H(+). Its function is as follows. Required for accurate and efficient protein synthesis under certain stress conditions. May act as a fidelity factor of the translation reaction, by catalyzing a one-codon backward translocation of tRNAs on improperly translocated ribosomes. Back-translocation proceeds from a post-translocation (POST) complex to a pre-translocation (PRE) complex, thus giving elongation factor G a second chance to translocate the tRNAs correctly. Binds to ribosomes in a GTP-dependent manner. The sequence is that of Elongation factor 4 from Methylorubrum extorquens (strain CM4 / NCIMB 13688) (Methylobacterium extorquens).